Consider the following 293-residue polypeptide: 4-hydroxy-tetrahydrodipicolinate synthase (293 aa).

Thr-45 contacts pyruvate. The active-site Proton donor/acceptor is Tyr-133. The active-site Schiff-base intermediate with substrate is the Lys-161. Ile-203 is a binding site for pyruvate.

Belongs to the DapA family. In terms of assembly, homotetramer; dimer of dimers.

The protein resides in the cytoplasm. The enzyme catalyses L-aspartate 4-semialdehyde + pyruvate = (2S,4S)-4-hydroxy-2,3,4,5-tetrahydrodipicolinate + H2O + H(+). Its pathway is amino-acid biosynthesis; L-lysine biosynthesis via DAP pathway; (S)-tetrahydrodipicolinate from L-aspartate: step 3/4. Functionally, catalyzes the condensation of (S)-aspartate-beta-semialdehyde [(S)-ASA] and pyruvate to 4-hydroxy-tetrahydrodipicolinate (HTPA). This is 4-hydroxy-tetrahydrodipicolinate synthase from Shewanella denitrificans (strain OS217 / ATCC BAA-1090 / DSM 15013).